Consider the following 149-residue polypeptide: Calmodulin (149 aa).

An N-acetylalanine modification is found at Ala-2. EF-hand domains follow at residues 8–43, 44–79, 81–116, and 117–149; these read EQIA…LGQN, PTEA…KMKD, DSEE…LGEK, and LTDE…MTSK. Ca(2+) is bound by residues Asp-21, Asp-23, Asp-25, Thr-27, Glu-32, Asp-57, Asp-59, Asp-61, Thr-63, Glu-68, Asp-94, Asp-96, Asn-98, and Glu-105. Lys-116 is subject to N6,N6,N6-trimethyllysine. Ca(2+) is bound by residues Asp-130, Asp-132, Asp-134, Gln-136, and Glu-141.

This sequence belongs to the calmodulin family.

Its function is as follows. Calmodulin mediates the control of a large number of enzymes, ion channels and other proteins by Ca(2+). Among the enzymes to be stimulated by the calmodulin-Ca(2+) complex are a number of protein kinases and phosphatases. The chain is Calmodulin from Pyuridae sp. (Sea squirt).